Here is a 125-residue protein sequence, read N- to C-terminus: Fluoride-specific ion channel FluC (125 aa).

4 consecutive transmembrane segments (helical) span residues Leu-9–Leu-29, Ala-32–Met-52, Ile-67–Thr-87, and Ala-99–Ile-119. Residues Gly-75 and Thr-78 each contribute to the Na(+) site.

The protein belongs to the fluoride channel Fluc/FEX (TC 1.A.43) family.

The protein localises to the cell inner membrane. The enzyme catalyses fluoride(in) = fluoride(out). Its activity is regulated as follows. Na(+) is not transported, but it plays an essential structural role and its presence is essential for fluoride channel function. Functionally, fluoride-specific ion channel. Important for reducing fluoride concentration in the cell, thus reducing its toxicity. The protein is Fluoride-specific ion channel FluC of Trichlorobacter lovleyi (strain ATCC BAA-1151 / DSM 17278 / SZ) (Geobacter lovleyi).